We begin with the raw amino-acid sequence, 375 residues long: Tryptophan--tRNA ligase (375 aa).

Residues 81–89 carry the 'HIGH' region motif; that stretch reads PSGPVHIGH. Residues 258–262 carry the 'KMSKS' region motif; the sequence is KMSAS.

The protein belongs to the class-I aminoacyl-tRNA synthetase family.

It localises to the cytoplasm. It catalyses the reaction tRNA(Trp) + L-tryptophan + ATP = L-tryptophyl-tRNA(Trp) + AMP + diphosphate + H(+). In Pyrobaculum aerophilum (strain ATCC 51768 / DSM 7523 / JCM 9630 / CIP 104966 / NBRC 100827 / IM2), this protein is Tryptophan--tRNA ligase.